The chain runs to 1225 residues: Hybrid signal transduction histidine kinase C (1225 aa).

Residues Gly8–Ile28 form a helical membrane-spanning segment. The segment covering Leu313 to Arg356 has biased composition (low complexity). Residues Leu313–Thr407 form a disordered region. A compositionally biased stretch (polar residues) spans Asn357 to Gln368. The span at Ser370–Ser388 shows a compositional bias: low complexity. The span at Asn389–Thr407 shows a compositional bias: polar residues. Residues His426–Thr653 form the Histidine kinase domain. His429 carries the phosphohistidine; by autocatalysis modification. A Response regulatory 1 domain is found at Ser669–Met784. Asp721 carries the 4-aspartylphosphate modification. Disordered stretches follow at residues Asn809–Gly832, Asp941–Asn974, and Tyr1021–Pro1076. A compositionally biased stretch (polar residues) spans Asn945–Met954. Residues Ser1023–Gly1037 show a composition bias toward low complexity. Polar residues predominate over residues Thr1058–Ser1072. The Response regulatory 2 domain maps to Lys1078–Glu1200. Position 1127 is a 4-aspartylphosphate (Asp1127).

Its subcellular location is the membrane. The enzyme catalyses ATP + protein L-histidine = ADP + protein N-phospho-L-histidine.. In terms of biological role, acts in a signal transduction pathway that regulates the slug versus culmination choice. Believed to be the first component of a phosphorelay that couples the sensing of ammonia to the modulation of PKA activity and hence activates culmination and spore germination. Ammonium transporters amtA and amtC are thought to respectively activate and inhibit dhkC phosphorelay. This protein probably undergoes an ATP-dependent autophosphorylation at conserved His residue in the kinase core, and a phosphoryl group is then transferred to a conserved aspartate residue in the receiver domain. The chain is Hybrid signal transduction histidine kinase C (dhkC) from Dictyostelium discoideum (Social amoeba).